Here is a 288-residue protein sequence, read N- to C-terminus: N-acetylneuraminate lyase (288 aa).

Aceneuramate is bound by residues Ser-44 and Thr-45. Catalysis depends on Tyr-133, which acts as the Proton donor. Lys-161 (schiff-base intermediate with substrate) is an active-site residue. Aceneuramate contacts are provided by Thr-163, Gly-185, Asp-187, Glu-188, and Ser-204.

It belongs to the DapA family. NanA subfamily. Homotetramer.

Its subcellular location is the cytoplasm. It catalyses the reaction aceneuramate = aldehydo-N-acetyl-D-mannosamine + pyruvate. It functions in the pathway amino-sugar metabolism; N-acetylneuraminate degradation; D-fructose 6-phosphate from N-acetylneuraminate: step 1/5. Functionally, catalyzes the reversible aldol cleavage of N-acetylneuraminic acid (sialic acid; Neu5Ac) to form pyruvate and N-acetylmannosamine (ManNAc) via a Schiff base intermediate. This chain is N-acetylneuraminate lyase, found in Clostridium perfringens (strain ATCC 13124 / DSM 756 / JCM 1290 / NCIMB 6125 / NCTC 8237 / Type A).